Reading from the N-terminus, the 312-residue chain is MVENQKKKKIEEIERCPECGSTNLIRDYEHGELVCGECGAVIEDSYIDQGPEWRAFDSEQNESRARAGSPMTFTIHDKGLSTDISWKNKDSYGRSIPTRNRAQLYRLRKWQKRIKVSNAAERNLSQALQELERMAFNLSIPNDVRETAAVIYRKAVKQNMIRGRSIEGVVAGALYAACRITNVPRTLGEIASVTRVKKKEIGRTYRIMSRYLKLNIMPSKAEDYISRFCSKLKLSMDTRNKALEILRDAENVGLTSGKGPTGVAAAAIYIASLITGERRTQRAVAEVAGVTEVTIRNRYKELTEKLKLNVEQ.

The TFIIB-type zinc-finger motif lies at E12–E43. Zn(2+) is bound by residues C16, C19, C35, and C38. 2 repeat units span residues Q129–L212 and D223–E304.

It belongs to the TFIIB family.

Stabilizes TBP binding to an archaeal box-A promoter. Also responsible for recruiting RNA polymerase II to the pre-initiation complex (DNA-TBP-TFIIB). This Thermoplasma volcanium (strain ATCC 51530 / DSM 4299 / JCM 9571 / NBRC 15438 / GSS1) protein is Transcription initiation factor IIB 1.